The primary structure comprises 432 residues: Homogentisate 1,2-dioxygenase (432 aa).

The Proton acceptor role is filled by His-287. Fe cation-binding residues include His-330 and Glu-336. Homogentisate-binding residues include Tyr-345 and His-366. His-366 contacts Fe cation.

The protein belongs to the homogentisate dioxygenase family. As to quaternary structure, hexamer; dimer of trimers. Fe cation serves as cofactor.

It carries out the reaction homogentisate + O2 = 4-maleylacetoacetate + H(+). Its pathway is amino-acid degradation; L-phenylalanine degradation; acetoacetate and fumarate from L-phenylalanine: step 4/6. Functionally, involved in the catabolism of homogentisate (2,5-dihydroxyphenylacetate or 2,5-OH-PhAc), a central intermediate in the degradation of phenylalanine and tyrosine. Catalyzes the oxidative ring cleavage of the aromatic ring of homogentisate to yield maleylacetoacetate. In Pseudomonas aeruginosa (strain ATCC 15692 / DSM 22644 / CIP 104116 / JCM 14847 / LMG 12228 / 1C / PRS 101 / PAO1), this protein is Homogentisate 1,2-dioxygenase.